We begin with the raw amino-acid sequence, 218 residues long: Stress response regulator protein 1 (218 aa).

A Response regulatory domain is found at 90-209; that stretch reads RFLLVDDNSI…YRVVLDVVDN (120 aa). Aspartate 142 bears the 4-aspartylphosphate mark.

In terms of biological role, required for stress adaptation, morphogenesis and virulence. In Meyerozyma guilliermondii (strain ATCC 6260 / CBS 566 / DSM 6381 / JCM 1539 / NBRC 10279 / NRRL Y-324) (Yeast), this protein is Stress response regulator protein 1 (SRR1).